The sequence spans 453 residues: MKLLVILLFSGLITGFRSDSSSSLPPKLLLVSFDGFRADYLKNYEFPHLQNFIKEGVLVEHVKNVFITKTFPNHYSIVTGLYEESHGIVANSMYDAVTKKHFSDSNDKDPFWWNEAVPIWVTNQLQENRSSAAAMWPGTDVPIHDTISSYFMNYNSSVSFEERLNNITMWLNNSNPPVTFATLYWEEPDASGHKYGPEDKENMSRVLKKIDDLIGDLVQRLKMLGLWENLNVIITSDHGMTQCSQDRLINLDSCIDHSYYTLIDLSPVAAILPKINRTEVYNKLKNCSPHMNVYLKEDIPNRFYYQHNDRIQPIILVADEGWTIVLNESSQKLGDHGYDNSLPSMHPFLAAHGPAFHKGYKHSTINIVDIYPMMCHILGLKPHPNNGTFGHTKCLLVDQWCINLPEAIAIVIGSLLVLTMLTCLIIIMQNRLSVPRPFSRLQLQEDDDDPLIG.

Residues 1 to 15 form the signal peptide; sequence MKLLVILLFSGLITG. Residues 16–407 are Extracellular-facing; the sequence is FRSDSSSSLP…DQWCINLPEA (392 aa). Zn(2+) is bound by residues aspartate 34 and threonine 70. Residue threonine 70 is the AMP-threonine intermediate of the active site. Asparagine 91 and tyrosine 154 together coordinate substrate. N-linked (GlcNAc...) asparagine glycans are attached at residues asparagine 155 and asparagine 166. Zn(2+) is bound by residues aspartate 189, histidine 193, aspartate 237, and histidine 238. Aspartate 189 serves as a coordination point for substrate. A disulfide bridge connects residues cysteine 254 and cysteine 287. N-linked (GlcNAc...) asparagine glycosylation occurs at asparagine 276. Residue histidine 336 coordinates Zn(2+). N-linked (GlcNAc...) asparagine glycosylation is present at asparagine 386. Cysteine 394 and cysteine 401 are joined by a disulfide. The helical transmembrane segment at 408-428 threads the bilayer; the sequence is IAIVIGSLLVLTMLTCLIIIM. The Cytoplasmic portion of the chain corresponds to 429–453; it reads QNRLSVPRPFSRLQLQEDDDDPLIG.

This sequence belongs to the nucleotide pyrophosphatase/phosphodiesterase family. The cofactor is Zn(2+). In terms of tissue distribution, expressed on the surface of vascular endothelia.

It localises to the cell membrane. It catalyses the reaction P(1),P(3)-bis(5'-adenosyl) triphosphate + H2O = AMP + ADP + 2 H(+). Its function is as follows. Hydrolyzes extracellular Ap3A into AMP and ADP, and Ap4A into AMP and ATP. Ap3A and Ap4A are diadenosine polyphosphates thought to induce proliferation of vascular smooth muscle cells. Acts as a procoagulant, mediating platelet aggregation at the site of nascent thrombus via release of ADP from Ap3A and activation of ADP receptors. The chain is Bis(5'-adenosyl)-triphosphatase ENPP4 (ENPP4) from Homo sapiens (Human).